Consider the following 421-residue polypeptide: MSAHSMLCERIAIAKELIKRAESLSRSRKGGIEGGAKLCSKLKAELKFLQKVEAGKVAIKESHLQSTNLTHLRAIVESAENLEEVVSVLHVFGYTDTFGEKQTLVVDVVANGGHTWVKAIGRKAEALHNIWLGRGQYGDKSIIEQAEDFLQASHQQPVQYSNPHIIFAFYNSVSSPMAEKLKEMGISVRGDIVAVNSLLDHPEELQPSESESDDEGPELLQVTRVDRENILASVAFPTEIKVDVCKRVNLDITTLITYVSALSYGGCHFIFKEKVLTEQAEQERKEQVLPQLEAFMKDKELFACESAVKDFQSILDTLGGPGERERAAMLIKRINVVPDQPSERALKLVASSKINSRSLTIFGTGDNLKAITMTANSGFVRAANNQGVKFSVFIHQPRALTESKEALATPLPKDCTTDSEH.

It belongs to the UPF0415 family.

This is UPF0415 protein C7orf25 homolog from Bos taurus (Bovine).